The sequence spans 103 residues: A-type ATP synthase subunit F (103 aa).

The protein belongs to the V-ATPase F subunit family. Has multiple subunits with at least A(3), B(3), C, D, E, F, H, I and proteolipid K(x).

It localises to the cell membrane. In terms of biological role, component of the A-type ATP synthase that produces ATP from ADP in the presence of a proton gradient across the membrane. The sequence is that of A-type ATP synthase subunit F from Pyrococcus abyssi (strain GE5 / Orsay).